A 273-amino-acid chain; its full sequence is Zinc finger protein AZF2 (273 aa).

Residues 33-64 (LKRKRSKRQRSHSPSSSSSSPPRSRPKSQNQD) are disordered. The segment covering 34 to 43 (KRKRSKRQRS) has biased composition (basic residues). The span at 44 to 54 (HSPSSSSSSPP) shows a compositional bias: low complexity. 2 C2H2-type zinc fingers span residues 106–128 (YKCNVCEKAFPSYQALGGHKASH) and 165–187 (HECSICHKVFPTGQALGGHKRCH). Positions 195 to 215 (GGGGGSKSISHSGSVSSTVSE) are disordered. Residues 201 to 213 (KSISHSGSVSSTV) are compositionally biased toward low complexity.

Expressed in roots, radicles, cotyledons, hypocotyls, leaf veins, stems, sepals, petals, stamens, placenta, funiculi and maturated seeds.

It localises to the nucleus. In terms of biological role, transcriptional repressor involved in the inhibition of plant growth under abiotic stress conditions. Can repress the expression of various genes, including osmotic stress and abscisic acid-repressive genes and auxin-inducible genes, by binding to their promoter regions in a DNA sequence-specific manner. Acts as a negative regulator of abscisic acid (ABA) signaling during seed germination. Probably involved in jasmonate (JA) early signaling response. May regulate the expression of the JA biosynthesis gene LOX3 and control the expression of TIFY10A/JAZ1, a key repressor in the JA signaling cascade. May act as a positive regulator of leaf senescence. Has been identified as a suppressor of the deficiency of yeast snf4 mutant to grow on non-fermentable carbon source. This Arabidopsis thaliana (Mouse-ear cress) protein is Zinc finger protein AZF2 (AZF2).